A 545-amino-acid polypeptide reads, in one-letter code: CTP synthase (545 aa).

The amidoligase domain stretch occupies residues 1-265 (MNGIKHIFIT…DKFVIKHLDL (265 aa)). Ser15 is a CTP binding site. UTP is bound at residue Ser15. Residues 16–21 (SIGKGL) and Asp73 each bind ATP. The Mg(2+) site is built by Asp73 and Glu141. CTP is bound by residues 148–150 (DIE), 188–193 (KTKPTQ), and Lys224. Residues 188–193 (KTKPTQ) and Lys224 contribute to the UTP site. Residues 290–534 (EIAIIGKYTG…VAAALARKEI (245 aa)) form the Glutamine amidotransferase type-1 domain. Residue Gly349 coordinates L-glutamine. The active-site Nucleophile; for glutamine hydrolysis is the Cys376. L-glutamine-binding positions include 377–380 (LGMQ), Glu400, and Arg460. Catalysis depends on residues His507 and Glu509.

It belongs to the CTP synthase family. Homotetramer.

The catalysed reaction is UTP + L-glutamine + ATP + H2O = CTP + L-glutamate + ADP + phosphate + 2 H(+). It carries out the reaction L-glutamine + H2O = L-glutamate + NH4(+). The enzyme catalyses UTP + NH4(+) + ATP = CTP + ADP + phosphate + 2 H(+). Its pathway is pyrimidine metabolism; CTP biosynthesis via de novo pathway; CTP from UDP: step 2/2. Its activity is regulated as follows. Allosterically activated by GTP, when glutamine is the substrate; GTP has no effect on the reaction when ammonia is the substrate. The allosteric effector GTP functions by stabilizing the protein conformation that binds the tetrahedral intermediate(s) formed during glutamine hydrolysis. Inhibited by the product CTP, via allosteric rather than competitive inhibition. In terms of biological role, catalyzes the ATP-dependent amination of UTP to CTP with either L-glutamine or ammonia as the source of nitrogen. Regulates intracellular CTP levels through interactions with the four ribonucleotide triphosphates. The sequence is that of CTP synthase from Tropheryma whipplei (strain TW08/27) (Whipple's bacillus).